We begin with the raw amino-acid sequence, 247 residues long: 14-3-3 protein gamma-B (247 aa).

It belongs to the 14-3-3 family. As to quaternary structure, homodimer, and heterodimer with other family members.

Its subcellular location is the cytoplasm. Functionally, adapter protein implicated in the regulation of a large spectrum of both general and specialized signaling pathways. Binds to a large number of partners, usually by recognition of a phosphoserine or phosphothreonine motif. Binding generally results in the modulation of the activity of the binding partner. The sequence is that of 14-3-3 protein gamma-B (ywhag-b) from Xenopus laevis (African clawed frog).